The following is a 614-amino-acid chain: Sodium- and chloride-dependent betaine transporter (614 aa).

The Cytoplasmic portion of the chain corresponds to 1 to 44; that stretch reads MDRKVTVHEDGCPVVSWVPEEGEMMDQKDKDQVKDRGQWTNKME. 3 consecutive transmembrane segments (helical) span residues 45-65, 73-92, and 117-137; these read FVLS…FPYL, AFFI…VFFL, and GIGM…IIIL. Residues 138 to 210 lie on the Extracellular side of the membrane; the sequence is AWALFYLFSS…SGIHDLGSLR (73 aa). Residues Asn-171 and Asn-183 are each glycosylated (N-linked (GlcNAc...) asparagine). 9 helical membrane passes run 211-229, 238-255, 291-308, 320-341, 374-393, 423-441, 458-478, 499-518, and 538-556; these read WELA…FCIW, VVYF…ILLI, IFFS…LGSY, IALC…FSIL, MPLS…FLGL, LLIL…LLVT, GICL…VYGA, ISWL…FSLS, and IGWL…FIII. Topologically, residues 557–614 are cytoplasmic; the sequence is TLLKTQGSFKKRLQRLITPDPSLPQPGRRSPQDGSSAQNCSTSPVKQELIAWEKETHL. Residues 574-600 form a disordered region; sequence TPDPSLPQPGRRSPQDGSSAQNCSTSP. Ser-586 carries the post-translational modification Phosphoserine. Over residues 588-600 the composition is skewed to polar residues; the sequence is QDGSSAQNCSTSP.

It belongs to the sodium:neurotransmitter symporter (SNF) (TC 2.A.22) family. SLC6A12 subfamily. As to quaternary structure, interacts with LIN7C.

The protein resides in the basolateral cell membrane. The protein localises to the cell membrane. It carries out the reaction 4-aminobutanoate(out) + chloride(out) + 3 Na(+)(out) = 4-aminobutanoate(in) + chloride(in) + 3 Na(+)(in). The enzyme catalyses glycine betaine(out) + 2 chloride(out) + 3 Na(+)(out) = glycine betaine(in) + 2 chloride(in) + 3 Na(+)(in). Functionally, transporter that mediates cellular uptake of betaine and GABA in a sodium- and chloride-dependent process. May have a role in regulation of GABAergic transmission in the brain through the reuptake of GABA into presynaptic terminals, as well as in osmotic regulation. Probably also involved in renal and hepatic osmotic regulation. The sequence is that of Sodium- and chloride-dependent betaine transporter (Slc6a12) from Rattus norvegicus (Rat).